We begin with the raw amino-acid sequence, 244 residues long: 3-deoxy-manno-octulosonate cytidylyltransferase (244 aa).

This sequence belongs to the KdsB family.

Its subcellular location is the cytoplasm. It catalyses the reaction 3-deoxy-alpha-D-manno-oct-2-ulosonate + CTP = CMP-3-deoxy-beta-D-manno-octulosonate + diphosphate. It functions in the pathway nucleotide-sugar biosynthesis; CMP-3-deoxy-D-manno-octulosonate biosynthesis; CMP-3-deoxy-D-manno-octulosonate from 3-deoxy-D-manno-octulosonate and CTP: step 1/1. Its pathway is bacterial outer membrane biogenesis; lipopolysaccharide biosynthesis. Functionally, activates KDO (a required 8-carbon sugar) for incorporation into bacterial lipopolysaccharide in Gram-negative bacteria. The protein is 3-deoxy-manno-octulosonate cytidylyltransferase of Vesicomyosocius okutanii subsp. Calyptogena okutanii (strain HA).